Here is a 209-residue protein sequence, read N- to C-terminus: Ribosomal RNA large subunit methyltransferase E (209 aa).

The S-adenosyl-L-methionine site is built by G63, W65, D83, D99, and D124. K164 serves as the catalytic Proton acceptor.

This sequence belongs to the class I-like SAM-binding methyltransferase superfamily. RNA methyltransferase RlmE family.

It localises to the cytoplasm. It catalyses the reaction uridine(2552) in 23S rRNA + S-adenosyl-L-methionine = 2'-O-methyluridine(2552) in 23S rRNA + S-adenosyl-L-homocysteine + H(+). In terms of biological role, specifically methylates the uridine in position 2552 of 23S rRNA at the 2'-O position of the ribose in the fully assembled 50S ribosomal subunit. In Pectobacterium atrosepticum (strain SCRI 1043 / ATCC BAA-672) (Erwinia carotovora subsp. atroseptica), this protein is Ribosomal RNA large subunit methyltransferase E.